The following is a 200-amino-acid chain: ATP-dependent Clp protease proteolytic subunit (200 aa).

The active-site Nucleophile is Ser102. Residue His127 is part of the active site.

It belongs to the peptidase S14 family. Fourteen ClpP subunits assemble into 2 heptameric rings which stack back to back to give a disk-like structure with a central cavity, resembling the structure of eukaryotic proteasomes.

It is found in the cytoplasm. The enzyme catalyses Hydrolysis of proteins to small peptides in the presence of ATP and magnesium. alpha-casein is the usual test substrate. In the absence of ATP, only oligopeptides shorter than five residues are hydrolyzed (such as succinyl-Leu-Tyr-|-NHMec, and Leu-Tyr-Leu-|-Tyr-Trp, in which cleavage of the -Tyr-|-Leu- and -Tyr-|-Trp bonds also occurs).. Functionally, cleaves peptides in various proteins in a process that requires ATP hydrolysis. Has a chymotrypsin-like activity. Plays a major role in the degradation of misfolded proteins. This is ATP-dependent Clp protease proteolytic subunit from Dehalococcoides mccartyi (strain ATCC BAA-2100 / JCM 16839 / KCTC 5957 / BAV1).